The sequence spans 768 residues: Pentatricopeptide repeat-containing protein At4g01030, mitochondrial (768 aa).

The transit peptide at 1–25 directs the protein to the mitochondrion; that stretch reads MYRFLGLTIHGGLIKRGLDNSDTRV. PPR repeat units follow at residues 22-52, 53-87, 88-122, 123-153, 154-188, 189-223, 224-254, 259-289, 290-324, 325-359, 360-394, 395-429, 430-460, 461-495, 496-526, and 532-562; these read DTRV…MPKR, DDLA…GAKA, YDST…GLES, NVSM…MKDR, NLSS…GLKP, DIVT…GLKP, STSS…ILRN, DVYV…MDAK, NIVA…GIKP, DAIT…GVAP, NVVS…GVGP, NAAT…NLIC, DAYV…IKNK, SLAS…GMEP, DAIT…MRSR, and TIEH…MSLK. Residues 567–642 are type E motif; it reads IWGAFLSSCK…QDLWSWIQID (76 aa). Residues 643 to 673 are type E(+) motif; that stretch reads QTVHIFYAEGKTHPDEGDIYFELYKLVSEMK. The interval 674-768 is type DYW motif; sequence KSGYVPDTSC…DGKCSCNDSW (95 aa).

It belongs to the PPR family. PCMP-H subfamily.

It localises to the mitochondrion. The polypeptide is Pentatricopeptide repeat-containing protein At4g01030, mitochondrial (PCMP-H65) (Arabidopsis thaliana (Mouse-ear cress)).